The following is a 59-amino-acid chain: Photosystem II reaction center protein K (59 aa).

Positions 1 to 22 (MLNIFSLIGLNSALYSSSCFFA) are excised as a propeptide. The chain crosses the membrane as a helical span at residues 30-50 (FLSPIVDFMPVIPLLFFLLAF).

It belongs to the PsbK family. As to quaternary structure, PSII is composed of 1 copy each of membrane proteins PsbA, PsbB, PsbC, PsbD, PsbE, PsbF, PsbH, PsbI, PsbJ, PsbK, PsbL, PsbM, PsbT, PsbX, PsbY, PsbZ, Psb30/Ycf12, at least 3 peripheral proteins of the oxygen-evolving complex and a large number of cofactors. It forms dimeric complexes.

It localises to the plastid. The protein localises to the chloroplast thylakoid membrane. In terms of biological role, one of the components of the core complex of photosystem II (PSII). PSII is a light-driven water:plastoquinone oxidoreductase that uses light energy to abstract electrons from H(2)O, generating O(2) and a proton gradient subsequently used for ATP formation. It consists of a core antenna complex that captures photons, and an electron transfer chain that converts photonic excitation into a charge separation. This chain is Photosystem II reaction center protein K, found in Silene latifolia (White campion).